A 453-amino-acid polypeptide reads, in one-letter code: Bifunctional protein GlmU (453 aa).

The pyrophosphorylase stretch occupies residues 1-228 (MPHWAAVIMA…VHEALGINSR (228 aa)). UDP-N-acetyl-alpha-D-glucosamine is bound by residues lysine 23, glutamine 73, 78 to 79 (GT), 100 to 102 (SGD), glycine 139, glutamate 153, asparagine 168, and asparagine 226. Aspartate 102 provides a ligand contact to Mg(2+). Asparagine 226 is a Mg(2+) binding site. Positions 229–249 (AQLAAAEDVARQRILSYWMEE) are linker. Residues 250-453 (GVTIIDPRST…IENWVRNKKK (204 aa)) are N-acetyltransferase. UDP-N-acetyl-alpha-D-glucosamine contacts are provided by arginine 331 and lysine 349. Residue histidine 361 is the Proton acceptor of the active site. UDP-N-acetyl-alpha-D-glucosamine-binding residues include tyrosine 364 and asparagine 375. Residues alanine 378, 384–385 (NY), serine 403, alanine 421, and arginine 438 each bind acetyl-CoA.

It in the N-terminal section; belongs to the N-acetylglucosamine-1-phosphate uridyltransferase family. In the C-terminal section; belongs to the transferase hexapeptide repeat family. In terms of assembly, homotrimer. Mg(2+) serves as cofactor.

Its subcellular location is the cytoplasm. It catalyses the reaction alpha-D-glucosamine 1-phosphate + acetyl-CoA = N-acetyl-alpha-D-glucosamine 1-phosphate + CoA + H(+). The catalysed reaction is N-acetyl-alpha-D-glucosamine 1-phosphate + UTP + H(+) = UDP-N-acetyl-alpha-D-glucosamine + diphosphate. It participates in nucleotide-sugar biosynthesis; UDP-N-acetyl-alpha-D-glucosamine biosynthesis; N-acetyl-alpha-D-glucosamine 1-phosphate from alpha-D-glucosamine 6-phosphate (route II): step 2/2. The protein operates within nucleotide-sugar biosynthesis; UDP-N-acetyl-alpha-D-glucosamine biosynthesis; UDP-N-acetyl-alpha-D-glucosamine from N-acetyl-alpha-D-glucosamine 1-phosphate: step 1/1. Its pathway is bacterial outer membrane biogenesis; LPS lipid A biosynthesis. Its function is as follows. Catalyzes the last two sequential reactions in the de novo biosynthetic pathway for UDP-N-acetylglucosamine (UDP-GlcNAc). The C-terminal domain catalyzes the transfer of acetyl group from acetyl coenzyme A to glucosamine-1-phosphate (GlcN-1-P) to produce N-acetylglucosamine-1-phosphate (GlcNAc-1-P), which is converted into UDP-GlcNAc by the transfer of uridine 5-monophosphate (from uridine 5-triphosphate), a reaction catalyzed by the N-terminal domain. This Desulfitobacterium hafniense (strain Y51) protein is Bifunctional protein GlmU.